The chain runs to 638 residues: Zinc finger protein 143 (638 aa).

Position 1 is an N-acetylmethionine (M1). Residue K213 forms a Glycyl lysine isopeptide (Lys-Gly) (interchain with G-Cter in SUMO2) linkage. 4 C2H2-type zinc fingers span residues 237 to 261 (FRCK…ERSH), 267 to 291 (YQCE…FRTH), 297 to 321 (YRCS…IRTH), and 327 to 351 (FKCP…IRTH). The residue at position 352 (T352) is a Phosphothreonine. 3 consecutive C2H2-type zinc fingers follow at residues 357 to 381 (YYCT…VRIH), 387 to 411 (YVCT…HVVH), and 417 to 440 (YNCN…RTAH). Residue K406 forms a Glycyl lysine isopeptide (Lys-Gly) (interchain with G-Cter in SUMO2) linkage.

The protein belongs to the GLI C2H2-type zinc-finger protein family. As to quaternary structure, interacts with CHD8. Forms a complex with HCFC1 and ZNF143.

The protein localises to the nucleus. In terms of biological role, transcriptional activator. In complex with HCFC1 and ZNF143, regulates the expression of several genes, including AP2S1, ESCO2, OPHN1, RBL1, UBXN8 and ZNF32. Activates the gene for selenocysteine tRNA (tRNAsec). Binds to the SPH motif of small nuclear RNA (snRNA) gene promoters. Participates in efficient U6 RNA polymerase III transcription via its interaction with CHD8. In Rattus norvegicus (Rat), this protein is Zinc finger protein 143 (Znf143).